The chain runs to 483 residues: Succinate semialdehyde dehydrogenase (483 aa).

NAD(+)-binding positions include 156 to 157 (WN), 180 to 183 (KPAP), and 233 to 234 (GS). The Proton acceptor role is filled by Glu-255. An NAD(+)-binding site is contributed by Leu-256. Residue Cys-289 is the Nucleophile of the active site. An NAD(+)-binding site is contributed by Glu-386.

The protein belongs to the aldehyde dehydrogenase family. Homotetramer.

The catalysed reaction is succinate semialdehyde + NAD(+) + H2O = succinate + NADH + 2 H(+). Its function is as follows. Involved in the degradation of the pyridine ring of trigonelline (TG; N-methylnicotinate) into succinate and methylamine as carbon and nitrogen sources, respectively. Catalyzes the NAD(+)-dependent oxidation of succinate semialdehyde to succinate. The polypeptide is Succinate semialdehyde dehydrogenase (Acinetobacter baylyi (strain ATCC 33305 / BD413 / ADP1)).